We begin with the raw amino-acid sequence, 793 residues long: Phenylalanine--tRNA ligase beta subunit (793 aa).

The 110-residue stretch at 39–148 (AGQFTHVIVA…DEAPIGMDLR (110 aa)) folds into the tRNA-binding domain. Residues 401 to 477 (PGTVSFLFDT…RLYGYDKLQA (77 aa)) enclose the B5 domain. Residues Asp-455, Asp-461, Glu-464, and Glu-465 each contribute to the Mg(2+) site. Residues 698–792 (SKYPQIRRDL…LENEFSILLR (95 aa)) enclose the FDX-ACB domain.

This sequence belongs to the phenylalanyl-tRNA synthetase beta subunit family. Type 1 subfamily. As to quaternary structure, tetramer of two alpha and two beta subunits. Mg(2+) is required as a cofactor.

Its subcellular location is the cytoplasm. It catalyses the reaction tRNA(Phe) + L-phenylalanine + ATP = L-phenylalanyl-tRNA(Phe) + AMP + diphosphate + H(+). In Legionella pneumophila (strain Paris), this protein is Phenylalanine--tRNA ligase beta subunit.